Here is a 465-residue protein sequence, read N- to C-terminus: UDP-N-acetylmuramate--L-alanine ligase (465 aa).

112-118 (GTHGKTT) is a binding site for ATP.

It belongs to the MurCDEF family.

It localises to the cytoplasm. The catalysed reaction is UDP-N-acetyl-alpha-D-muramate + L-alanine + ATP = UDP-N-acetyl-alpha-D-muramoyl-L-alanine + ADP + phosphate + H(+). It functions in the pathway cell wall biogenesis; peptidoglycan biosynthesis. Its function is as follows. Cell wall formation. The sequence is that of UDP-N-acetylmuramate--L-alanine ligase from Burkholderia multivorans (strain ATCC 17616 / 249).